Reading from the N-terminus, the 280-residue chain is Shikimate dehydrogenase (NADP(+)) (280 aa).

Shikimate is bound by residues 15–17 (SLS) and Thr62. The active-site Proton acceptor is the Lys66. Residues Asn88 and Asp104 each contribute to the shikimate site. Residues 128 to 132 (GAGGA), 151 to 156 (NRTEER), and Ile222 each bind NADP(+). A shikimate-binding site is contributed by Tyr224. An NADP(+)-binding site is contributed by Gly245.

This sequence belongs to the shikimate dehydrogenase family. Homodimer.

It catalyses the reaction shikimate + NADP(+) = 3-dehydroshikimate + NADPH + H(+). It functions in the pathway metabolic intermediate biosynthesis; chorismate biosynthesis; chorismate from D-erythrose 4-phosphate and phosphoenolpyruvate: step 4/7. Involved in the biosynthesis of the chorismate, which leads to the biosynthesis of aromatic amino acids. Catalyzes the reversible NADPH linked reduction of 3-dehydroshikimate (DHSA) to yield shikimate (SA). The polypeptide is Shikimate dehydrogenase (NADP(+)) (Methanosarcina acetivorans (strain ATCC 35395 / DSM 2834 / JCM 12185 / C2A)).